We begin with the raw amino-acid sequence, 427 residues long: Sensor histidine kinase ArsS (427 aa).

Helical transmembrane passes span phenylalanine 3–phenylalanine 23 and asparagine 131–leucine 151. One can recognise an HAMP domain in the interval leucine 151–glutamate 203. The Histidine kinase domain occupies serine 211–isoleucine 398. A Phosphohistidine; by autocatalysis modification is found at histidine 214.

Post-translationally, autophosphorylated.

The protein resides in the membrane. It catalyses the reaction ATP + protein L-histidine = ADP + protein N-phospho-L-histidine.. Its function is as follows. Member of the two-component regulatory system ArsS/ArsR that regulates genes involved in biofilm formation and acid adaptation by acting on major ammonia-producing pathways. Functions as a sensor protein kinase which is autophosphorylated at a histidine residue and transfers its phosphate group to the conserved aspartic acid residue in the regulatory domain of ArsR. In turn, ArsR binds to the upstream promoter regions of target genes including ureA, amiE and amiF to positively regulate their expression in response to acidic pH. Also participates in acidic acclimatation in a phosphorylation-independent pathway by regulating acid-induced trafficking of urease and its accessory proteins to the inner membrane. This is Sensor histidine kinase ArsS from Helicobacter pylori (strain ATCC 700392 / 26695) (Campylobacter pylori).